The sequence spans 214 residues: tRNA (guanine-N(7)-)-methyltransferase (214 aa).

S-adenosyl-L-methionine contacts are provided by glutamate 43, glutamate 68, aspartate 95, and aspartate 117. Aspartate 117 is a catalytic residue. Substrate is bound by residues lysine 121, aspartate 153, and 190–193; that span reads TEYE.

Belongs to the class I-like SAM-binding methyltransferase superfamily. TrmB family.

It catalyses the reaction guanosine(46) in tRNA + S-adenosyl-L-methionine = N(7)-methylguanosine(46) in tRNA + S-adenosyl-L-homocysteine. It functions in the pathway tRNA modification; N(7)-methylguanine-tRNA biosynthesis. Functionally, catalyzes the formation of N(7)-methylguanine at position 46 (m7G46) in tRNA. This is tRNA (guanine-N(7)-)-methyltransferase from Staphylococcus aureus (strain COL).